The chain runs to 271 residues: OX-2 membrane glycoprotein homolog (271 aa).

The first 24 residues, 1-24 (MSSLFISLPWVAFIWLALLGAVGG), serve as a signal peptide directing secretion. The Extracellular segment spans residues 25-227 (ARVQGPMRGS…QGPLAHDLPA (203 aa)). Residues 26 to 129 (RVQGPMRGSA…SCTACLEVTS (104 aa)) form the Ig-like V-type domain. A disulfide bond links Cys-39 and Cys-109. Asn-83, Asn-91, Asn-138, Asn-157, Asn-166, and Asn-208 each carry an N-linked (GlcNAc...) asparagine; by host glycan. The Ig-like C2-type domain occupies 130 to 220 (PPTGHVQVNS…ISIPASIQGP (91 aa)). Cysteines 148 and 202 form a disulfide. A helical membrane pass occupies residues 228-248 (AQGTLAGVAITLVGLFGIFAL). Residues 249-271 (HHCRRKQGGASPTSDDMDPLSTQ) lie on the Cytoplasmic side of the membrane.

As to quaternary structure, interacts with human CD200R1. In terms of processing, N-glycosylated.

Its subcellular location is the host cell membrane. Its function is as follows. Dramatically stimulates primary monocytes, macrophages, and dendritic cells to produce the inflammatory cytokines interleukin 1-beta, IL-6, monocyte chemoattractant protein 1, and TNF-alpha. The induction of inflammatory cytokine production potentially promotes the cytokine-mediated angiogenic proliferation of KSHV-infected cells. This is OX-2 membrane glycoprotein homolog (K14) from Human herpesvirus 8 type P (isolate GK18) (HHV-8).